We begin with the raw amino-acid sequence, 125 residues long: NADPH-dependent 7-cyano-7-deazaguanine reductase (125 aa).

Residue cysteine 41 is the Thioimide intermediate of the active site. Catalysis depends on aspartate 48, which acts as the Proton donor. Residues 63 to 65 and 82 to 83 each bind substrate; these read VEL and HE.

This sequence belongs to the GTP cyclohydrolase I family. QueF type 1 subfamily.

The protein localises to the cytoplasm. The catalysed reaction is 7-aminomethyl-7-carbaguanine + 2 NADP(+) = 7-cyano-7-deazaguanine + 2 NADPH + 3 H(+). It participates in tRNA modification; tRNA-queuosine biosynthesis. Functionally, catalyzes the NADPH-dependent reduction of 7-cyano-7-deazaguanine (preQ0) to 7-aminomethyl-7-deazaguanine (preQ1). This is NADPH-dependent 7-cyano-7-deazaguanine reductase from Sulfurimonas denitrificans (strain ATCC 33889 / DSM 1251) (Thiomicrospira denitrificans (strain ATCC 33889 / DSM 1251)).